The chain runs to 127 residues: Glycine cleavage system H protein (127 aa).

Residues 22–104 (TVRIGITDFA…YDKAWMIVIE (83 aa)) enclose the Lipoyl-binding domain. The residue at position 63 (K63) is an N6-lipoyllysine.

It belongs to the GcvH family. The glycine cleavage system is composed of four proteins: P, T, L and H. It depends on (R)-lipoate as a cofactor.

Its function is as follows. The glycine cleavage system catalyzes the degradation of glycine. The H protein shuttles the methylamine group of glycine from the P protein to the T protein. Functionally, is also involved in protein lipoylation via its role as an octanoyl/lipoyl carrier protein intermediate. The chain is Glycine cleavage system H protein from Anoxybacillus flavithermus (strain DSM 21510 / WK1).